Consider the following 1128-residue polypeptide: Lysylphosphatidylglycerol biosynthesis bifunctional protein LysX (1128 aa).

Positions 1-47 (MDNPPPTGVAPRHLPPGSVHTGKVTASLSHRRPDSVQDAPPAPVPHR) are disordered. The interval 1–632 (MDNPPPTGVA…GLHADGSPPD (632 aa)) is phosphatidylglycerol lysyltransferase. 6 helical membrane passes run 55 to 75 (VPHI…LWSL), 97 to 117 (APDT…AIAS), 121 to 141 (IAWW…GLRF), 147 to 167 (INAL…IAAW), 184 to 204 (GVLV…VEVF), and 240 to 260 (FVNV…VLTL). The interval 619–644 (DTLTGLHADGSPPDWPKPDLLDSGPR) is disordered. Residues 633-1128 (WPKPDLLDSG…TLPFPLVKPR (496 aa)) form a lysine--tRNA ligase region. Residues 634-644 (PKPDLLDSGPR) are compositionally biased toward basic and acidic residues. Residues Asp1040 and Glu1047 each coordinate Mg(2+).

The protein in the N-terminal section; belongs to the LPG synthetase family. In the C-terminal section; belongs to the class-II aminoacyl-tRNA synthetase family. Requires Mg(2+) as cofactor.

The protein localises to the cell membrane. The enzyme catalyses tRNA(Lys) + L-lysine + ATP = L-lysyl-tRNA(Lys) + AMP + diphosphate. It catalyses the reaction L-lysyl-tRNA(Lys) + a 1,2-diacyl-sn-glycero-3-phospho-(1'-sn-glycerol) = a 1,2-diacyl-sn-glycero-3-phospho-1'-(3'-O-L-lysyl)-sn-glycerol + tRNA(Lys). In terms of biological role, catalyzes the production of L-lysyl-tRNA(Lys)transfer and the transfer of a lysyl group from L-lysyl-tRNA(Lys) to membrane-bound phosphatidylglycerol (PG), which produces lysylphosphatidylglycerol (LPG), one of the components of the bacterial membrane with a positive net charge. LPG synthesis contributes to the resistance to cationic antimicrobial peptides (CAMPs) and likely protects M.tuberculosis against the CAMPs produced by competiting microorganisms (bacteriocins). In fact, the modification of anionic phosphatidylglycerol with positively charged L-lysine results in repulsion of the peptides. This Nocardia farcinica (strain IFM 10152) protein is Lysylphosphatidylglycerol biosynthesis bifunctional protein LysX (lysX).